Consider the following 767-residue polypeptide: Golgin subfamily A member 1 (767 aa).

Residues 13–58 (TAVAQRPGGATRIPRSVSKESVASMGADSGDDFASDGSSSREDLSS) form a disordered region. Phosphoserine occurs at positions 30, 36, 41, 47, 50, and 51. Residues 50-657 (SSSREDLSSQ…RKTLQKELKI (608 aa)) adopt a coiled-coil conformation. The region spanning 688 to 737 (TDAREINFEYLKHVVLKFMSCRESEAFHLIKAVSVLLNFSQEEENMLKET) is the GRIP domain. Residues 748 to 767 (KPAPKGSIRPSISNPRIPWS) are disordered.

Interacts with RAB6A. Directly interacts with TBC1D23. Interacts with FAM91A1; this interaction may be mediated by TBC1D23. Interacts with ARL1; this interaction recruits Golgin-97/GOLGA1 onto the Golgi apparatus. MARylated by PARP12; MARylation is required for basolateral export of E-Cadherin.

It localises to the golgi apparatus membrane. The protein resides in the golgi apparatus. It is found in the trans-Golgi network membrane. The protein localises to the cytoplasmic vesicle. Its subcellular location is the secretory vesicle. It localises to the acrosome. Functionally, involved in vesicular trafficking at the Golgi apparatus level. Involved in endosome-to-Golgi trafficking. Mechanistically, captures transport vesicles arriving from endosomes via the protein TBC1D23. Recognized vesicles are then tethered to the trans-Golgi before subsequent SNARE engagement and vesicle fusion. Selectively regulates E-cadherin transport from the trans-Golgi network in tubulovesicular carriers. Its function is as follows. (Microbial infection) Plays an important role in poxvirus morphogenesis. Translocates into the viral factories where it may transport the membrane fragments and associated protein factors important for virus maturation to the sites of virion assembly. The sequence is that of Golgin subfamily A member 1 (GOLGA1) from Homo sapiens (Human).